A 492-amino-acid chain; its full sequence is RNA helicase CrhR (492 aa).

The Q motif motif lies at 7 to 35 (STFADLGLSEKRCQLLADIGFEAPTQIQT). Residues 38-207 (IPLLLSGRDM…NQFLNDPALV (170 aa)) form the Helicase ATP-binding domain. 51-58 (SQTGTGKT) lines the ATP pocket. The DEAD box motif lies at 155-158 (DEAD). A Helicase C-terminal domain is found at 234-379 (KALQPILEME…VCTIPNRSQV (146 aa)). The disordered stretch occupies residues 451–492 (VLRRGRNAGGGQNKSGGGYQGKPGKPRRSSGGRRPAYSDRQQ). Gly residues predominate over residues 457-471 (NAGGGQNKSGGGYQG).

The protein belongs to the DEAD box helicase family.

The protein resides in the cytoplasm. It localises to the cell inner membrane. The protein localises to the cellular thylakoid membrane. The enzyme catalyses ATP + H2O = ADP + phosphate + H(+). Helicase inhibited by the slowly-hydrolyzing ATP analog ATP-gamma-S. Protein is rapidly degraded upon shifting from 20 to 30 degrees Celsius, the degradation machinery is only transiently present in cells grown at 30 degrees Celsius, is inhibited by commercial protease inhibitors and requires full-length protein expression (the N-terminal fragment does not induce proteolysis although it can be degraded by wild-type extract). Functionally, an ATP-dependent bidirectional RNA helicase with RNA-dependent ATPase activity; does not unwind dsDNA, uses only (d)ATP. Also has ATP-dependent RNA annealing activity; concurrent annealing and helicase activity promote strand-exchange activity. In vitro has low helicase processivity, annealing processivity is probably higher. Required for correct cold adaptation, probably by aiding translation of mRNAs required for photosynthesis and electron transport. Probably regulates the cold-shock-inducible expression of the GroESL chaperones. May partially regulate its own expression at both the transcriptional and post-transcriptional level (experiments used a construct expressing a 25 kDa trunacted protein which might have dominant-negative effects); is probably not directly involved in the pathway responsible for mRNA degradation. In Synechocystis sp. (strain ATCC 27184 / PCC 6803 / Kazusa), this protein is RNA helicase CrhR.